The following is a 235-amino-acid chain: Large ribosomal subunit protein uL1 (235 aa).

Belongs to the universal ribosomal protein uL1 family. In terms of assembly, part of the 50S ribosomal subunit.

In terms of biological role, binds directly to 23S rRNA. The L1 stalk is quite mobile in the ribosome, and is involved in E site tRNA release. Its function is as follows. Protein L1 is also a translational repressor protein, it controls the translation of the L11 operon by binding to its mRNA. The chain is Large ribosomal subunit protein uL1 from Mycolicibacterium smegmatis (strain ATCC 700084 / mc(2)155) (Mycobacterium smegmatis).